We begin with the raw amino-acid sequence, 218 residues long: Peptide methionine sulfoxide reductase MsrA (218 aa).

Residue Cys-57 is part of the active site.

Belongs to the MsrA Met sulfoxide reductase family.

The enzyme catalyses L-methionyl-[protein] + [thioredoxin]-disulfide + H2O = L-methionyl-(S)-S-oxide-[protein] + [thioredoxin]-dithiol. It catalyses the reaction [thioredoxin]-disulfide + L-methionine + H2O = L-methionine (S)-S-oxide + [thioredoxin]-dithiol. Has an important function as a repair enzyme for proteins that have been inactivated by oxidation. Catalyzes the reversible oxidation-reduction of methionine sulfoxide in proteins to methionine. The sequence is that of Peptide methionine sulfoxide reductase MsrA from Brucella abortus (strain S19).